A 247-amino-acid polypeptide reads, in one-letter code: T-cell surface glycoprotein CD8 alpha chain (247 aa).

The signal sequence occupies residues 1–27 (MASPLTRFLSLNLLLLGESIILGSGEA). An Ig-like V-type domain is found at 28–139 (KPQAPELRIF…SVISNSVMYF (112 aa)). The Extracellular portion of the chain corresponds to 28 to 196 (KPQAPELRIF…TGLDFACDIY (169 aa)). The cysteines at positions 53 and 129 are disulfide-linked. N69, N97, and N150 each carry an N-linked (GlcNAc...) asparagine glycan. Positions 156–182 (PVLRTPSPVHPTGTSQPQRPEDCRPRG) are disordered. The helical transmembrane segment at 197 to 217 (IWAPLAGICVALLLSLIITLI) threads the bilayer. Residues 218–247 (CYHRSRKRVCKCPRPLVRQEGKPRPSEKIV) are Cytoplasmic-facing.

Forms disulfide-linked heterodimers with CD8B at the cell surface. Also forms homodimers in several cell types including NK-cells or peripheral blood T-lymphocytes. Interacts with the MHC class I HLA-A/B2M dimer. Interacts with LCK in a zinc-dependent manner. Post-translationally, palmitoylated, but association with CD8B seems to be more important for the enrichment of CdD8A in lipid rafts. Phosphorylated in cytotoxic T-lymphocytes (CTLs) following activation.

It is found in the cell membrane. In terms of biological role, integral membrane glycoprotein that plays an essential role in the immune response and serves multiple functions in responses against both external and internal offenses. In T-cells, functions primarily as a coreceptor for MHC class I molecule:peptide complex. The antigens presented by class I peptides are derived from cytosolic proteins while class II derived from extracellular proteins. Interacts simultaneously with the T-cell receptor (TCR) and the MHC class I proteins presented by antigen presenting cells (APCs). In turn, recruits the Src kinase LCK to the vicinity of the TCR-CD3 complex. LCK then initiates different intracellular signaling pathways by phosphorylating various substrates ultimately leading to lymphokine production, motility, adhesion and activation of cytotoxic T-lymphocytes (CTLs). This mechanism enables CTLs to recognize and eliminate infected cells and tumor cells. In NK-cells, the presence of CD8A homodimers at the cell surface provides a survival mechanism allowing conjugation and lysis of multiple target cells. CD8A homodimer molecules also promote the survival and differentiation of activated lymphocytes into memory CD8 T-cells. The sequence is that of T-cell surface glycoprotein CD8 alpha chain (Cd8a) from Mus musculus (Mouse).